The sequence spans 502 residues: L-aspartate oxidase (502 aa).

Residues 12-15, K34, 41-48, and D207 contribute to the FAD site; these read NGLA and ASRHAQGG. R276 acts as the Proton donor/acceptor in catalysis. FAD-binding positions include E362 and 378–379; that span reads SL.

The protein belongs to the FAD-dependent oxidoreductase 2 family. NadB subfamily. FAD is required as a cofactor.

Its subcellular location is the cytoplasm. The enzyme catalyses L-aspartate + O2 = iminosuccinate + H2O2. It functions in the pathway cofactor biosynthesis; NAD(+) biosynthesis; iminoaspartate from L-aspartate (oxidase route): step 1/1. Catalyzes the oxidation of L-aspartate to iminoaspartate, the first step in the de novo biosynthesis of NAD(+). In Neisseria meningitidis serogroup B (strain ATCC BAA-335 / MC58), this protein is L-aspartate oxidase (nadB).